The sequence spans 354 residues: Ion-translocating oxidoreductase complex subunit D (354 aa).

A run of 4 helical transmembrane segments spans residues I19–G39, F40–V60, A77–F99, and I119–T139. The residue at position 187 (T187) is an FMN phosphoryl threonine. A run of 5 helical transmembrane segments spans residues W221–I241, I245–K265, M268–A288, S295–I315, and G319–I339.

Belongs to the NqrB/RnfD family. The complex is composed of six subunits: RnfA, RnfB, RnfC, RnfD, RnfE and RnfG. The cofactor is FMN.

Its subcellular location is the cell inner membrane. Functionally, part of a membrane-bound complex that couples electron transfer with translocation of ions across the membrane. The protein is Ion-translocating oxidoreductase complex subunit D of Buchnera aphidicola subsp. Baizongia pistaciae (strain Bp).